A 568-amino-acid polypeptide reads, in one-letter code: UPF0313 protein FN0734 (568 aa).

The Radical SAM core domain occupies 289 to 562 (ALDTIKYSVT…KQKQKDIVTE (274 aa)). Residues Cys-303, Cys-307, and Cys-310 each contribute to the [4Fe-4S] cluster site. The tract at residues 546-568 (VEKDNGKKQKQKDIVTEKRKNRK) is disordered.

It belongs to the UPF0313 family. Requires [4Fe-4S] cluster as cofactor.

In Fusobacterium nucleatum subsp. nucleatum (strain ATCC 25586 / DSM 15643 / BCRC 10681 / CIP 101130 / JCM 8532 / KCTC 2640 / LMG 13131 / VPI 4355), this protein is UPF0313 protein FN0734.